The chain runs to 480 residues: Uridine 5'-monophosphate synthase (480 aa).

A2 is subject to N-acetylalanine. The interval 2–214 is OPRTase; the sequence is AAVGAALGPL…VFVAANHNGS (213 aa). Y37 carries the phosphotyrosine modification. S214 carries the phosphoserine modification. The domain linker stretch occupies residues 215–220; that stretch reads PLSIKE. Positions 221–480 are OMPdecase; it reads APKELSFSAR…WEAYLSRLGV (260 aa). S257 is a binding site for orotidine 5'-phosphate. Residues S257, D259, and 281–283 each bind UMP; that span reads KTH. Residues K281, K314, D317, T321, S372, 430 to 432, and 450 to 451 each bind orotidine 5'-phosphate; these read QQY and GR. Residues K314 and D317 each act as for OMPdecase activity in the active site. Residues D317, T321, S372, 430 to 432, and 450 to 451 contribute to the UMP site; these read QQY and GR.

This sequence in the N-terminal section; belongs to the purine/pyrimidine phosphoribosyltransferase family. The protein in the C-terminal section; belongs to the OMP decarboxylase family. Homodimer; dimerization is required for enzymatic activity.

It carries out the reaction orotidine 5'-phosphate + diphosphate = orotate + 5-phospho-alpha-D-ribose 1-diphosphate. It catalyses the reaction orotidine 5'-phosphate + H(+) = UMP + CO2. The protein operates within pyrimidine metabolism; UMP biosynthesis via de novo pathway; UMP from orotate: step 1/2. It participates in pyrimidine metabolism; UMP biosynthesis via de novo pathway; UMP from orotate: step 2/2. Functionally, bifunctional enzyme catalyzing the last two steps of de novo pyrimidine biosynthesis, orotate phosphoribosyltransferase (OPRT), which converts orotate to orotidine-5'-monophosphate (OMP), and orotidine-5'-monophosphate decarboxylase (ODC), the terminal enzymatic reaction that decarboxylates OMP to uridine monophosphate (UMP). The protein is Uridine 5'-monophosphate synthase (UMPS) of Pongo abelii (Sumatran orangutan).